The following is a 310-amino-acid chain: 4-hydroxyproline epimerase (310 aa).

Cysteine 88 (proton acceptor) is an active-site residue. Substrate is bound by residues 89-90 (GH), histidine 208, and aspartate 232. The Proton donor role is filled by cysteine 236. Residue 237–238 (GT) coordinates substrate.

This sequence belongs to the proline racemase family. As to quaternary structure, homodimer.

It carries out the reaction trans-4-hydroxy-L-proline = cis-4-hydroxy-D-proline. Functionally, allows intracellular utilization of 4-hydroxyproline, one of the major constituents of host collagen, by converting 4-hydroxy-L-proline to 4-hydroxy-D-proline, which can be further metabolized by intracellular 4-hydroxy-D-proline oxidases. The sequence is that of 4-hydroxyproline epimerase from Burkholderia cenocepacia (strain HI2424).